Consider the following 51-residue polypeptide: Insulin (51 aa).

Cystine bridges form between cysteine 7-cysteine 37, cysteine 19-cysteine 50, and cysteine 36-cysteine 41.

Belongs to the insulin family. Heterodimer of a B chain and an A chain linked by two disulfide bonds.

Its subcellular location is the secreted. Insulin decreases blood glucose concentration. It increases cell permeability to monosaccharides, amino acids and fatty acids. It accelerates glycolysis, the pentose phosphate cycle, and glycogen synthesis in liver. In Elephas maximus (Indian elephant), this protein is Insulin (INS).